Consider the following 213-residue polypeptide: uncharacterized protein (213 aa).

Residues S114, D162, and H194 each act as charge relay system in the active site.

It belongs to the AB hydrolase superfamily. AB hydrolase 2 family.

This is an uncharacterized protein from Rickettsia bellii (strain RML369-C).